The primary structure comprises 156 residues: Endogenous retrovirus group K member 25 Pro protein (156 aa).

The Peptidase A2 domain occupies 21-96 (FEGLVDTGAD…IPLNLWGRDL (76 aa)). Aspartate 26 is a catalytic residue. Positions 111–156 (YSPTSQKIMTKMGYIPGKGLGKNEDGIKIPVEAKINQKREGIGYPF) constitute a G-patch domain.

Belongs to the peptidase A2 family. HERV class-II K(HML-2) subfamily. As to quaternary structure, active as a homodimer. Post-translationally, autoproteolytically processed at the N-terminus. Expected C-terminal autoprocessing not detected. The sequence shown is that of the processed Pro protein.

The enzyme catalyses Processing at the authentic HIV-1 PR recognition site and release of the mature p17 matrix and the p24 capsid protein, as a result of the cleavage of the -SQNY-|-PIVQ- cleavage site.. Its function is as follows. Retroviral proteases have roles in processing of the primary translation products and the maturation of the viral particle. Endogenous Pro proteins may have kept, lost or modified their original function during evolution. This endogenous protein has retained most of the characteristics of retroviral proteases. This Homo sapiens (Human) protein is Endogenous retrovirus group K member 25 Pro protein (ERVK-25).